A 994-amino-acid chain; its full sequence is Myosin IA heavy chain (994 aa).

The region spanning Val12 to Asn720 is the Myosin motor domain. Gly105–Thr112 lines the ATP pocket. Positions Thr574 to Phe654 are actin-binding. IQ domains are found at residues Leu723–Leu744 and Arg745–Ser774. The TH1 domain occupies Arg782–Ala970.

It belongs to the TRAFAC class myosin-kinesin ATPase superfamily. Myosin family. In terms of assembly, myosin I heavy chain is single-headed. Dimer of a heavy and a light chain. Inability to self-assemble into filaments.

Its function is as follows. Actin-based motor protein, possibly involved in a wide range of motile processes, such as cell movement across a surface, and extension and retraction of pseudopodia or lamellipodia. The sequence is that of Myosin IA heavy chain (myoA) from Dictyostelium discoideum (Social amoeba).